Reading from the N-terminus, the 90-residue chain is Acylphosphatase (90 aa).

The 86-residue stretch at 5–90 (CLKAWVTGRV…DPPPGTFELG (86 aa)) folds into the Acylphosphatase-like domain. Residues R20 and N38 contribute to the active site.

It belongs to the acylphosphatase family.

It catalyses the reaction an acyl phosphate + H2O = a carboxylate + phosphate + H(+). The sequence is that of Acylphosphatase (acyP) from Chromohalobacter salexigens (strain ATCC BAA-138 / DSM 3043 / CIP 106854 / NCIMB 13768 / 1H11).